The following is a 382-amino-acid chain: Mannitol-1-phosphate 5-dehydrogenase (382 aa).

3 to 14 (ALHFGAGNIGRG) provides a ligand contact to NAD(+). Lysine 269 carries the post-translational modification N6-acetyllysine.

The protein belongs to the mannitol dehydrogenase family.

It catalyses the reaction D-mannitol 1-phosphate + NAD(+) = beta-D-fructose 6-phosphate + NADH + H(+). This Escherichia coli O9:H4 (strain HS) protein is Mannitol-1-phosphate 5-dehydrogenase.